A 254-amino-acid chain; its full sequence is tRNA pseudouridine synthase A (254 aa).

D52 functions as the Nucleophile in the catalytic mechanism. Position 111 (Y111) interacts with substrate.

This sequence belongs to the tRNA pseudouridine synthase TruA family. Homodimer.

The enzyme catalyses uridine(38/39/40) in tRNA = pseudouridine(38/39/40) in tRNA. Its function is as follows. Formation of pseudouridine at positions 38, 39 and 40 in the anticodon stem and loop of transfer RNAs. The sequence is that of tRNA pseudouridine synthase A from Rhizorhabdus wittichii (strain DSM 6014 / CCUG 31198 / JCM 15750 / NBRC 105917 / EY 4224 / RW1) (Sphingomonas wittichii).